The sequence spans 62 residues: Protein DsrB (62 aa).

This sequence belongs to the DsrB family.

The polypeptide is Protein DsrB (Citrobacter koseri (strain ATCC BAA-895 / CDC 4225-83 / SGSC4696)).